We begin with the raw amino-acid sequence, 692 residues long: Serine/threonine-protein kinase Nek8 (692 aa).

Positions 4 to 258 (YERIRVVGRG…LSHIMAQPLC (255 aa)) constitute a Protein kinase domain. Residues 10 to 18 (VGRGAFGIV) and Lys-33 each bind ATP. Catalysis depends on Asp-128, which acts as the Proton acceptor. Thr-162 carries the post-translational modification Phosphothreonine; by autocatalysis. Residues 277–301 (AEKSVAPSNTGSRTTSVRCRGIPRG) form a disordered region. The segment covering 282–293 (APSNTGSRTTSV) has biased composition (polar residues). 5 RCC1 repeats span residues 312–350 (SSVY…VTRS), 410–461 (GIIM…LSTE), 462–513 (RELF…LTVP), 580–631 (GDCY…IGAE), and 632–684 (SEVY…AVRS).

Belongs to the protein kinase superfamily. NEK Ser/Thr protein kinase family. NIMA subfamily. As to quaternary structure, interacts with PKD2; may regulate PKD2 targeting to the cilium. Interacts with ANKS6. Component of a complex containing at least ANKS6, INVS, NEK8 and NPHP3. ANKS6 may organize complex assembly by linking INVS and NPHP3 to NEK8 and INVS may target the complex to the proximal ciliary axoneme. Interacts with ANKS3. It depends on Mg(2+) as a cofactor. As to expression, highest expression in thyroid, adrenal gland and skin. Low levels in spleen, colon and uterus. Overexpressed in breast tumors, with highest expression in infiltrating ductal carcinomas and moderate levels in mucinous adenocarcinoma.

The protein resides in the cytoplasm. It localises to the cytoskeleton. The protein localises to the cell projection. It is found in the cilium. Its subcellular location is the microtubule organizing center. The protein resides in the centrosome. It localises to the cilium axoneme. The catalysed reaction is L-seryl-[protein] + ATP = O-phospho-L-seryl-[protein] + ADP + H(+). It catalyses the reaction L-threonyl-[protein] + ATP = O-phospho-L-threonyl-[protein] + ADP + H(+). Its function is as follows. Required for renal tubular integrity. May regulate local cytoskeletal structure in kidney tubule epithelial cells. May regulate ciliary biogenesis through targeting of proteins to the cilia. Plays a role in organogenesis, and is involved in the regulation of the Hippo signaling pathway. This Homo sapiens (Human) protein is Serine/threonine-protein kinase Nek8 (NEK8).